The primary structure comprises 398 residues: Acetate kinase (398 aa).

Asparagine 10 is a Mg(2+) binding site. Lysine 17 lines the ATP pocket. Arginine 89 provides a ligand contact to substrate. Catalysis depends on aspartate 148, which acts as the Proton donor/acceptor. Residues 208–212 (HLGNG), 283–285 (DCR), and 331–335 (GIGEN) each bind ATP. Glutamate 385 contributes to the Mg(2+) binding site.

The protein belongs to the acetokinase family. Homodimer. Requires Mg(2+) as cofactor. The cofactor is Mn(2+).

It is found in the cytoplasm. The catalysed reaction is acetate + ATP = acetyl phosphate + ADP. The protein operates within metabolic intermediate biosynthesis; acetyl-CoA biosynthesis; acetyl-CoA from acetate: step 1/2. Its function is as follows. Catalyzes the formation of acetyl phosphate from acetate and ATP. Can also catalyze the reverse reaction. This Histophilus somni (strain 2336) (Haemophilus somnus) protein is Acetate kinase.